The chain runs to 387 residues: 1-deoxy-D-xylulose 5-phosphate reductoisomerase (387 aa).

The NADPH site is built by threonine 10, glycine 11, serine 12, isoleucine 13, glycine 36, asparagine 38, and asparagine 122. Lysine 123 is a 1-deoxy-D-xylulose 5-phosphate binding site. Glutamate 124 contacts NADPH. Aspartate 148 is a Mn(2+) binding site. Positions 149, 150, 174, and 197 each coordinate 1-deoxy-D-xylulose 5-phosphate. Glutamate 150 is a binding site for Mn(2+). Position 203 (glycine 203) interacts with NADPH. 1-deoxy-D-xylulose 5-phosphate is bound by residues serine 210, asparagine 215, lysine 216, and glutamate 219. Residue glutamate 219 coordinates Mn(2+).

The protein belongs to the DXR family. Mg(2+) serves as cofactor. Mn(2+) is required as a cofactor.

It carries out the reaction 2-C-methyl-D-erythritol 4-phosphate + NADP(+) = 1-deoxy-D-xylulose 5-phosphate + NADPH + H(+). Its pathway is isoprenoid biosynthesis; isopentenyl diphosphate biosynthesis via DXP pathway; isopentenyl diphosphate from 1-deoxy-D-xylulose 5-phosphate: step 1/6. Its function is as follows. Catalyzes the NADPH-dependent rearrangement and reduction of 1-deoxy-D-xylulose-5-phosphate (DXP) to 2-C-methyl-D-erythritol 4-phosphate (MEP). This Chloroherpeton thalassium (strain ATCC 35110 / GB-78) protein is 1-deoxy-D-xylulose 5-phosphate reductoisomerase.